We begin with the raw amino-acid sequence, 90 residues long: uncharacterized protein (90 aa).

Transmembrane regions (helical) follow at residues Phe5–Ile27, Ile40–Ala62, and Met67–Val89.

It localises to the cell membrane. This is an uncharacterized protein from Archaeoglobus fulgidus (strain ATCC 49558 / DSM 4304 / JCM 9628 / NBRC 100126 / VC-16).